A 985-amino-acid polypeptide reads, in one-letter code: Probable oxidoreductase YjgC (985 aa).

The 2Fe-2S ferredoxin-type domain maps to 3–79 (GKKTITINGV…GDVIDTLSPD (77 aa)). 4 residues coordinate [2Fe-2S] cluster: Cys37, Cys48, Cys51, and Cys63. The region spanning 79 to 119 (DVKKAQVIGMDKILYNHELYCTVCDYNNGGCEIHNTVKEMK) is the 4Fe-4S His(Cys)3-ligated-type domain. His95, Cys99, Cys102, Cys109, Cys148, Cys151, Cys154, Cys158, Cys191, Cys194, Cys197, Cys201, Cys265, Cys268, Cys272, and Cys300 together coordinate [4Fe-4S] cluster. 2 4Fe-4S ferredoxin-type domains span residues 139–170 (PFYR…LTID) and 182–211 (NDVP…EKGM). Residues 258–314 (IKKTKTVCTYCGVGCSFDVWTKGRDILKVEPQEEAPANGISTCVKGKFGWDFVNSEE) form the 4Fe-4S Mo/W bis-MGD-type domain.

This sequence in the C-terminal section; belongs to the prokaryotic molybdopterin-containing oxidoreductase family. The cofactor is [2Fe-2S] cluster. [4Fe-4S] cluster serves as cofactor. Mo-bis(molybdopterin guanine dinucleotide) is required as a cofactor.

The chain is Probable oxidoreductase YjgC (yjgC) from Bacillus subtilis (strain 168).